Here is an 81-residue protein sequence, read N- to C-terminus: Apolipoprotein C-I, acidic form (81 aa).

An N-terminal signal peptide occupies residues 1-24 (MRLFLSLLVVVLSIVLEGPTPAQG).

It belongs to the apolipoprotein C1 family.

It localises to the secreted. This Cercocebus atys (Sooty mangabey) protein is Apolipoprotein C-I, acidic form (APOC1A).